Consider the following 672-residue polypeptide: Putative sodium/calcium exchanger 7 (672 aa).

A signal peptide spans 1–23 (MAQPSILFSLTLIFLISIKSCDA). 12 consecutive transmembrane segments (helical) span residues 88-108 (VILI…VSSA), 130-150 (VAGV…GSIA), 164-184 (LGEL…TIIL), 196-216 (IRDL…FVFY), 221-241 (LWMP…VIGA), 451-471 (LTLL…QFFL), 479-499 (PGLW…IMVF), 522-542 (IAWI…LGVV), 551-571 (GLTI…VSVV), 581-601 (AAAI…PFTI), 620-640 (LILF…VQKF), and 649-669 (VLIS…TGVL).

The protein belongs to the Ca(2+):cation antiporter (CaCA) (TC 2.A.19) family.

Its subcellular location is the membrane. In Caenorhabditis elegans, this protein is Putative sodium/calcium exchanger 7 (ncx-7).